The chain runs to 186 residues: MNAIQFRYFKGVMTKEPLKTIIDTWYKLRAERDKKLTNIFNTIPFYESWLGDETSIFGIVCSYDNPARDEAVLTKGYRTEDYKGKCVVKPDRRYKVGKDFDKKLQAIRQILKEAPDFSSYSLKELGMYLLVGNFSRLYFSVSGVQDDIYIAKIPVKEQGNFGDDFLEIHECLTEIKESEFLSIQGL.

This is an uncharacterized protein from Haemophilus influenzae (strain ATCC 51907 / DSM 11121 / KW20 / Rd).